The primary structure comprises 522 residues: MNATIPQRSAKQNPVELYDLQLQALASIARTLSREQQIDELLEQVLAVLHNDLGLLHGLVTISDPEHGALQIGAIHTDSEAVAQACEGVRYRSGEGVIGNVLKHGNSVVLGRISADPRFLDRLALYDLEMPFIAVPIKNPEGNTIGVLAAQPDCRADEHMPARTRFLEIVANLLAQTVRLVVNIEDGREAADERDELRREVRGKYGFENMVVGHTPTMRRVFDQIRRVAKWNSTVLVLGESGTGKELIASAIHYKSPRAHRPFVRLNCAALPETLLESELFGHEKGAFTGAVKQRKGRFEQADGGTLFLDEIGEISPMFQAKLLRVLQEGEFERVGGNQTVRVNVRIVAATNRDLESEVEKGKFREDLYYRLNVMAIRIPPLRERTADIPELAEFLLGKIGRQQGRPLTVTDSAIRLLMSHRWPGNVRELENCLERSAIMSEDGTITRDVVSLTGVDNESPPLAAPLPEVNLADETLDDRERVIAALEQAGWVQAKAARLLGMTPRQIAYRIQTLNIHMRKI.

The interval Met1–Ile184 is a domain. The 142-residue stretch at Gln37–Val178 folds into the GAF domain. Residues Val211–Ile439 form the Sigma-54 factor interaction domain. ATP contacts are provided by residues Gly239–Glu246 and Ala302–Glu311. Positions Met440–Asp479 are inter-domain linker. Residues Arg480–Ile522 form a C-terminal DNA-binding domain region. A DNA-binding region (H-T-H motif) is located at residues Gln494–Gln513.

Interacts with sigma-54.

In terms of biological role, required for activation of most nif operons, which are directly involved in nitrogen fixation. This Azotobacter vinelandii protein is Nif-specific regulatory protein (nifA).